Consider the following 201-residue polypeptide: Glycerol-3-phosphate acyltransferase (201 aa).

Transmembrane regions (helical) follow at residues 3-23, 51-71, 85-105, 116-136, 137-157, and 158-178; these read TVLFALGAYLIGSISFAVVVS, KAAILTLLGDGAKGFLAVWLV, VALVAIAVFLGHLWPVFFRFV, VLLALNGWLGLATLVTWLVIA, YAFRYSSLAALIAAIFAPFYY, and GLLFGPDVILLAVLAMSILLV.

Belongs to the PlsY family. Probably interacts with PlsX.

The protein resides in the cell inner membrane. It catalyses the reaction an acyl phosphate + sn-glycerol 3-phosphate = a 1-acyl-sn-glycero-3-phosphate + phosphate. It participates in lipid metabolism; phospholipid metabolism. In terms of biological role, catalyzes the transfer of an acyl group from acyl-phosphate (acyl-PO(4)) to glycerol-3-phosphate (G3P) to form lysophosphatidic acid (LPA). This enzyme utilizes acyl-phosphate as fatty acyl donor, but not acyl-CoA or acyl-ACP. This chain is Glycerol-3-phosphate acyltransferase, found in Janthinobacterium sp. (strain Marseille) (Minibacterium massiliensis).